A 92-amino-acid polypeptide reads, in one-letter code: YcgL domain-containing protein Sputcn32_1766 (92 aa).

Residues 1–85 (MLCTVYKSTR…PQVNLLAEHK (85 aa)) form the YcgL domain.

The chain is YcgL domain-containing protein Sputcn32_1766 from Shewanella putrefaciens (strain CN-32 / ATCC BAA-453).